Consider the following 215-residue polypeptide: Protein C' (215 aa).

Residues 12–34 are disordered; it reads MPSFLKKILKLRGRRQEDESRSR. The tract at residues 15-22 is involved in self-degradation and in host STAT1 degradation; that stretch reads FLKKILKL. A compositionally biased stretch (basic and acidic residues) spans 25 to 35; that stretch reads RRQEDESRSRM. A compositionally biased stretch (polar residues) spans 36–66; sequence LSDSSTQSYQVNQLTSEGTEAGSTIPSTPSK.

Belongs to the respirovirus protein C family. As to quaternary structure, the different isoforms interact (via C-terminus) with unphosphorylated and phosphorylated human STAT1 (via N-terminus), favoring the formation of parallel STAT1 homodimers. The different isoforms do not interact with host STAT2. C protein interacts with L protein; this interaction has an inhibitory effect on viral transcription and replication. In terms of processing, protein Y1 is produced not only by alternative initiation, but also by proteolytic cleavage of C'. Only alternative initiation is detected in vitro, whereas in vivo cleavage seems to be predominant.

It is found in the host cytoplasm. Functionally, the different products prevent the establishment of cellular antiviral state by blocking the interferon-alpha/beta (IFN-alpha/beta) and IFN-gamma signaling pathways. They inhibit IFN-alpha/beta induced tyrosine phosphorylation of STAT1 and STAT2. Blocking the IFN-alpha/beta pathway requires binding to STAT1 in the cytoplasm. They inhibit IFN-gamma induced serine phosphorylation of STAT1. Block the IFN-gamma pathway by binding to and stabilizing the parallel form of the STAT1 dimer, further inducing high-molecular-weight complex formation and inhibition of transcription by IFN-gamma. May also have a role in preventing the cell to enter apoptosis. Modulate regulation of viral transcription and replication. Overexpression inhibits the viral RNA polymerase. The absence of all C', C and Y1 proteins leads to viral delayed growth. Plays an important role in virion particles release. Modulates virion shape. The protein is Protein C' (P/V/C) of Sendai virus (strain Ohita) (SeV).